Consider the following 392-residue polypeptide: Probable nucleoredoxin 3 (392 aa).

2 consecutive Thioredoxin domains span residues 17-171 (LYSI…DSKR) and 177-326 (EKLL…ELKA).

This sequence belongs to the nucleoredoxin family.

The catalysed reaction is [protein]-dithiol + NAD(+) = [protein]-disulfide + NADH + H(+). It carries out the reaction [protein]-dithiol + NADP(+) = [protein]-disulfide + NADPH + H(+). Its function is as follows. Probable thiol-disulfide oxidoreductase that may participate in various redox reactions. The chain is Probable nucleoredoxin 3 from Arabidopsis thaliana (Mouse-ear cress).